Here is a 227-residue protein sequence, read N- to C-terminus: Cytochrome c oxidase subunit 2 (227 aa).

The Mitochondrial intermembrane segment spans residues 1 to 14; the sequence is MAYPFQLGLQDATS. A helical membrane pass occupies residues 15-45; sequence PIMEELLHFHDHTLMIVFLISSLVLYIITLM. The Mitochondrial matrix portion of the chain corresponds to 46-59; sequence LTTKLTHTSTMDAQ. Residues 60 to 87 form a helical membrane-spanning segment; the sequence is EVETVWTILPAIILILIALPSLRILYMM. Residues 88-227 lie on the Mitochondrial intermembrane side of the membrane; it reads DEINNPSLTV…YFETWSALMV (140 aa). Cu cation contacts are provided by His-161, Cys-196, Glu-198, Cys-200, His-204, and Met-207. Mg(2+) is bound at residue Glu-198. The residue at position 218 (Tyr-218) is a Phosphotyrosine.

Belongs to the cytochrome c oxidase subunit 2 family. Component of the cytochrome c oxidase (complex IV, CIV), a multisubunit enzyme composed of 14 subunits. The complex is composed of a catalytic core of 3 subunits MT-CO1, MT-CO2 and MT-CO3, encoded in the mitochondrial DNA, and 11 supernumerary subunits COX4I, COX5A, COX5B, COX6A, COX6B, COX6C, COX7A, COX7B, COX7C, COX8 and NDUFA4, which are encoded in the nuclear genome. The complex exists as a monomer or a dimer and forms supercomplexes (SCs) in the inner mitochondrial membrane with NADH-ubiquinone oxidoreductase (complex I, CI) and ubiquinol-cytochrome c oxidoreductase (cytochrome b-c1 complex, complex III, CIII), resulting in different assemblies (supercomplex SCI(1)III(2)IV(1) and megacomplex MCI(2)III(2)IV(2)). Found in a complex with TMEM177, COA6, COX18, COX20, SCO1 and SCO2. Interacts with TMEM177 in a COX20-dependent manner. Interacts with COX20. Interacts with COX16. It depends on Cu cation as a cofactor.

It localises to the mitochondrion inner membrane. It catalyses the reaction 4 Fe(II)-[cytochrome c] + O2 + 8 H(+)(in) = 4 Fe(III)-[cytochrome c] + 2 H2O + 4 H(+)(out). Its function is as follows. Component of the cytochrome c oxidase, the last enzyme in the mitochondrial electron transport chain which drives oxidative phosphorylation. The respiratory chain contains 3 multisubunit complexes succinate dehydrogenase (complex II, CII), ubiquinol-cytochrome c oxidoreductase (cytochrome b-c1 complex, complex III, CIII) and cytochrome c oxidase (complex IV, CIV), that cooperate to transfer electrons derived from NADH and succinate to molecular oxygen, creating an electrochemical gradient over the inner membrane that drives transmembrane transport and the ATP synthase. Cytochrome c oxidase is the component of the respiratory chain that catalyzes the reduction of oxygen to water. Electrons originating from reduced cytochrome c in the intermembrane space (IMS) are transferred via the dinuclear copper A center (CU(A)) of subunit 2 and heme A of subunit 1 to the active site in subunit 1, a binuclear center (BNC) formed by heme A3 and copper B (CU(B)). The BNC reduces molecular oxygen to 2 water molecules using 4 electrons from cytochrome c in the IMS and 4 protons from the mitochondrial matrix. This Vulpes macrotis (Kit fox) protein is Cytochrome c oxidase subunit 2 (MT-CO2).